The following is a 325-amino-acid chain: Eukaryotic translation initiation factor 3 subunit I (325 aa).

4 WD repeats span residues 8 to 47 (GHER…RLGT), 50 to 91 (GHTG…ALLK), 144 to 183 (CNDS…VLVN), and 186 to 225 (EHSR…HQKT). T219 carries the phosphothreonine modification. Residue K264 is modified to N6-acetyllysine. A Glycyl lysine isopeptide (Lys-Gly) (interchain with G-Cter in ubiquitin) cross-link involves residue K282. The stretch at 283-324 (GHFGLINSVAFHPDGKSYSSGGEDGYVRIHYFDPQYFEFEFE) is one WD 5 repeat. Residue Y308 is modified to Phosphotyrosine.

It belongs to the eIF-3 subunit I family. Component of the eukaryotic translation initiation factor 3 (eIF-3) complex, which is composed of 13 subunits: EIF3A, EIF3B, EIF3C, EIF3D, EIF3E, EIF3F, EIF3G, EIF3H, EIF3I, EIF3J, EIF3K, EIF3L and EIF3M. The eIF-3 complex appears to include 3 stable modules: module A is composed of EIF3A, EIF3B, EIF3G and EIF3I; module B is composed of EIF3F, EIF3H, and EIF3M; and module C is composed of EIF3C, EIF3D, EIF3E, EIF3K and EIF3L. EIF3C of module C binds EIF3B of module A and EIF3H of module B, thereby linking the three modules. EIF3J is a labile subunit that binds to the eIF-3 complex via EIF3B. The eIF-3 complex interacts with RPS6KB1 under conditions of nutrient depletion. Mitogenic stimulation leads to binding and activation of a complex composed of MTOR and RPTOR, leading to phosphorylation and release of RPS6KB1 and binding of EIF4B to eIF-3. In terms of processing, phosphorylated by TGF-beta type II receptor.

The protein resides in the cytoplasm. Its function is as follows. Component of the eukaryotic translation initiation factor 3 (eIF-3) complex, which is required for several steps in the initiation of protein synthesis. The eIF-3 complex associates with the 40S ribosome and facilitates the recruitment of eIF-1, eIF-1A, eIF-2:GTP:methionyl-tRNAi and eIF-5 to form the 43S pre-initiation complex (43S PIC). The eIF-3 complex stimulates mRNA recruitment to the 43S PIC and scanning of the mRNA for AUG recognition. The eIF-3 complex is also required for disassembly and recycling of post-termination ribosomal complexes and subsequently prevents premature joining of the 40S and 60S ribosomal subunits prior to initiation. The eIF-3 complex specifically targets and initiates translation of a subset of mRNAs involved in cell proliferation, including cell cycling, differentiation and apoptosis, and uses different modes of RNA stem-loop binding to exert either translational activation or repression. The polypeptide is Eukaryotic translation initiation factor 3 subunit I (Pongo abelii (Sumatran orangutan)).